Reading from the N-terminus, the 806-residue chain is DNA topoisomerase 4 subunit A (806 aa).

In terms of domain architecture, Topo IIA-type catalytic spans 33 to 499 (LPDARDGLKP…EEIKINLEVM (467 aa)). Residue tyrosine 121 is the O-(5'-phospho-DNA)-tyrosine intermediate of the active site.

Belongs to the type II topoisomerase GyrA/ParC subunit family. ParC type 2 subfamily. Heterotetramer composed of ParC and ParE.

It localises to the cell membrane. Its subcellular location is the cytoplasm. It catalyses the reaction ATP-dependent breakage, passage and rejoining of double-stranded DNA.. In terms of biological role, topoisomerase IV is essential for chromosome segregation. It relaxes supercoiled DNA. Performs the decatenation events required during the replication of a circular DNA molecule. This chain is DNA topoisomerase 4 subunit A, found in Bacillus subtilis (strain 168).